A 320-amino-acid chain; its full sequence is GTP 3',8-cyclase (320 aa).

The Radical SAM core domain occupies 4–226 (TFQRSINYMR…PIITDATSPA (223 aa)). Position 13 (arginine 13) interacts with GTP. Residues cysteine 20 and cysteine 24 each coordinate [4Fe-4S] cluster. Tyrosine 26 is a binding site for S-adenosyl-L-methionine. Cysteine 27 contributes to the [4Fe-4S] cluster binding site. Residue arginine 63 coordinates GTP. Glycine 67 contacts S-adenosyl-L-methionine. Position 94 (threonine 94) interacts with GTP. Serine 118 serves as a coordination point for S-adenosyl-L-methionine. Lysine 155 provides a ligand contact to GTP. An S-adenosyl-L-methionine-binding site is contributed by methionine 189. [4Fe-4S] cluster-binding residues include cysteine 249 and cysteine 252. 254-256 (RIR) lines the GTP pocket. Cysteine 266 contacts [4Fe-4S] cluster.

This sequence belongs to the radical SAM superfamily. MoaA family. In terms of assembly, monomer and homodimer. Requires [4Fe-4S] cluster as cofactor.

The catalysed reaction is GTP + AH2 + S-adenosyl-L-methionine = (8S)-3',8-cyclo-7,8-dihydroguanosine 5'-triphosphate + 5'-deoxyadenosine + L-methionine + A + H(+). It participates in cofactor biosynthesis; molybdopterin biosynthesis. In terms of biological role, catalyzes the cyclization of GTP to (8S)-3',8-cyclo-7,8-dihydroguanosine 5'-triphosphate. The sequence is that of GTP 3',8-cyclase from Alkaliphilus metalliredigens (strain QYMF).